The chain runs to 358 residues: Transcriptional repressor protein KorB (358 aa).

Positions 1–42 are enriched in low complexity; that stretch reads MTAAQAKTTKKNTAAAAQEAAGAAQPSGLGLDSIGDLSSLLD. 2 disordered regions span residues 1-79 and 256-305; these read MTAA…FSPE and DPNT…DKLK. Positions 275–285 are enriched in acidic residues; the sequence is AGDGQDGEDGD. Residues 286–305 are compositionally biased toward basic and acidic residues; it reads QDGKDAKEKGAKEPDPDKLK.

The protein belongs to the ParB family.

In terms of biological role, in conjunction with KorA, inhibits the transcription of the kilA, trfA and korAB operons. Is also involved in the negative control of the kilB operon. This chain is Transcriptional repressor protein KorB (korB), found in Escherichia coli.